Consider the following 384-residue polypeptide: Dihydrolipoyllysine-residue acetyltransferase component of pyruvate dehydrogenase complex (384 aa).

One can recognise a Lipoyl-binding domain in the interval 2–77 (ANEFKFTDVG…SIGQVMAVIG (76 aa)). Lysine 43 is modified (N6-lipoyllysine). Histidine 356 is a catalytic residue.

This sequence belongs to the 2-oxoacid dehydrogenase family. In terms of assembly, forms a 24-polypeptide structural core with octahedral symmetry. (R)-lipoate serves as cofactor.

It catalyses the reaction N(6)-[(R)-dihydrolipoyl]-L-lysyl-[protein] + acetyl-CoA = N(6)-[(R)-S(8)-acetyldihydrolipoyl]-L-lysyl-[protein] + CoA. In terms of biological role, the pyruvate dehydrogenase complex catalyzes the overall conversion of pyruvate to acetyl-CoA and CO(2). It contains multiple copies of three enzymatic components: pyruvate dehydrogenase (E1), dihydrolipoamide acetyltransferase (E2) and lipoamide dehydrogenase (E3). The sequence is that of Dihydrolipoyllysine-residue acetyltransferase component of pyruvate dehydrogenase complex (pdhC) from Mycoplasma genitalium (strain ATCC 33530 / DSM 19775 / NCTC 10195 / G37) (Mycoplasmoides genitalium).